We begin with the raw amino-acid sequence, 862 residues long: Autotaxin (862 aa).

Positions 1–27 are cleaved as a signal peptide; sequence MARQGCFGSYQVISLFTFAIGVNLCLG. The propeptide at 28–35 is removed by furin; that stretch reads FTASRIKR. Asn-53 carries an N-linked (GlcNAc...) asparagine glycan. SMB domains are found at residues 54-97 and 98-142; these read TSGS…LKTA and RGWE…GESH. Intrachain disulfides connect Cys-58–Cys-75, Cys-62–Cys-93, Cys-73–Cys-86, Cys-79–Cys-85, Cys-102–Cys-119, Cys-107–Cys-137, Cys-117–Cys-130, Cys-123–Cys-129, Cys-148–Cys-194, and Cys-156–Cys-350. The Cell attachment site signature appears at 126 to 128; that stretch reads RGD. The tract at residues 144-501 is phosphodiesterase domain; that stretch reads VDDDCEEIRV…PTFKYRTKVP (358 aa). Zn(2+) contacts are provided by Asp-171 and Thr-209. Catalysis depends on Thr-209, which acts as the Nucleophile. 3 residues coordinate 1-(9Z-octadecenoyl)-sn-glycero-3-phosphate: Thr-209, Asn-230, and Asp-311. 3 residues coordinate 1-hexadecanoyl-sn-glycero-3-phosphate: Thr-209, Asn-230, and Asp-311. The 1-tetradecanoyl-sn-glycerol 3-phosphate site is built by Thr-209, Asn-230, and Asp-311. Residues Asp-311, His-315, Asp-358, and His-359 each contribute to the Zn(2+) site. Intrachain disulfides connect Cys-366–Cys-468, Cys-413–Cys-805, Cys-566–Cys-666, Cys-568–Cys-651, and Cys-774–Cys-784. Asn-410 is a glycosylation site (N-linked (GlcNAc...) asparagine). His-474 serves as a coordination point for Zn(2+). 1-(9Z-octadecenoyl)-sn-glycero-3-phosphate is bound at residue His-474. His-474 is a binding site for 1-hexadecanoyl-sn-glycero-3-phosphate. His-474 contacts 1-tetradecanoyl-sn-glycerol 3-phosphate. N-linked (GlcNAc...) asparagine glycosylation is present at Asn-524. Residues 597-862 are nuclease-like domain; that stretch reads LYGRPAVLYR…TYLHTYESEI (266 aa). 5 residues coordinate Ca(2+): Asp-739, Asn-741, Asn-743, Leu-745, and Asp-747. A glycan (N-linked (GlcNAc...) asparagine) is linked at Asn-806. A required for secretion region spans residues 829-850; the sequence is IEHLTGLDFYRKTSRSYSEILT.

This sequence belongs to the nucleotide pyrophosphatase/phosphodiesterase family. It depends on Zn(2+) as a cofactor. The cofactor is Ca(2+). In terms of processing, N-glycosylation, but not furin-cleavage, plays a critical role on secretion and on lysoPLD activity. Secretion requires simultaneous glycosylation on Asn-53 and Asn-410, while probable glycosylation of Asn-410 has a preferential role on lysoPLD activity. Not O-glycosylated. The interdomain disulfide bond between Cys-413 and Cys-805 is essential for catalytic activity. In terms of tissue distribution, expressed in brain and adipose tissue.

Its subcellular location is the secreted. It carries out the reaction a 1-O-alkyl-sn-glycero-3-phosphoethanolamine + H2O = a 1-O-alkyl-sn-glycero-3-phosphate + ethanolamine + H(+). It catalyses the reaction a 1-acyl-sn-glycero-3-phosphoethanolamine + H2O = a 1-acyl-sn-glycero-3-phosphate + ethanolamine + H(+). The enzyme catalyses 1-(9Z-octadecenoyl)-sn-glycero-3-phosphoethanolamine + H2O = 1-(9Z-octadecenoyl)-sn-glycero-3-phosphate + ethanolamine + H(+). The catalysed reaction is a 1-O-alkyl-sn-glycero-3-phosphocholine + H2O = a 1-O-alkyl-sn-glycero-3-phosphate + choline + H(+). It carries out the reaction 1-O-(9Z-octadecenyl)-sn-glycero-3-phosphocholine + H2O = 1-O-(9Z-octadecenyl)-sn-glycero-3-phosphate + choline + H(+). It catalyses the reaction 1-O-hexadecyl-sn-glycero-3-phosphocholine + H2O = 1-O-hexadecyl-sn-glycero-3-phosphate + choline + H(+). The enzyme catalyses a 1-O-(1Z-alkenyl)-sn-glycero-3-phosphocholine + H2O = a 1-O-(1Z-alkenyl)-sn-glycero-3-phosphate + choline + H(+). The catalysed reaction is a 1-acyl-sn-glycero-3-phosphocholine + H2O = a 1-acyl-sn-glycero-3-phosphate + choline + H(+). It carries out the reaction 1-dodecanoyl-sn-glycero-3-phosphocholine + H2O = 1-dodecanoyl-sn-glycerol 3-phosphate + choline + H(+). It catalyses the reaction 1-(9Z-octadecenoyl)-sn-glycero-3-phosphocholine + H2O = 1-(9Z-octadecenoyl)-sn-glycero-3-phosphate + choline + H(+). The enzyme catalyses 1-tetradecanoyl-sn-glycero-3-phosphocholine + H2O = 1-tetradecanoyl-sn-glycerol 3-phosphate + choline + H(+). The catalysed reaction is 1-decanoyl-sn-glycero-3-phosphocholine + H2O = 1-decanoyl-sn-glycero-3-phosphate + choline + H(+). It carries out the reaction 1-octadecanoyl-sn-glycero-3-phosphocholine + H2O = 1-octadecanoyl-sn-glycero-3-phosphate + choline + H(+). It catalyses the reaction 1-hexadecanoyl-sn-glycero-3-phosphocholine + H2O = 1-hexadecanoyl-sn-glycero-3-phosphate + choline + H(+). The enzyme catalyses 1-hexanoyl-sn-glycero-3-phosphocholine + H2O = 1-hexanoyl-sn-glycero-3-phosphate + choline + H(+). The catalysed reaction is 1-(9Z,12Z)-octadecadienoyl-sn-glycero-3-phosphocholine + H2O = 1-(9Z,12Z)-octadecadienoyl-sn-glycero-3-phosphate + choline + H(+). It carries out the reaction sphing-4-enine-phosphocholine + H2O = sphing-4-enine 1-phosphate + choline + H(+). It catalyses the reaction 1-(5Z,8Z,11Z,14Z-eicosatetraenoyl)-sn-glycero-3-phosphocholine + H2O = 1-(5Z,8Z,11Z,14Z-eicosatetraenoyl)-sn-glycero-3-phosphate + choline + H(+). The enzyme catalyses a 2-acyl-sn-glycero-3-phosphocholine + H2O = a 2-acyl-sn-glycerol 3-phosphate + choline + H(+). The catalysed reaction is a 1,2-diacyl-sn-glycero-3-phosphocholine + H2O = a 1,2-diacyl-sn-glycero-3-phosphate + choline + H(+). It carries out the reaction 1,2-dioctanoyl-sn-glycero-3-phosphocholine + H2O = 1,2-dioctanoyl-sn-glycero-3-phosphate + choline + H(+). It catalyses the reaction 1,2-didecanoyl-sn-glycero-3-phosphocholine + H2O = 1,2-didecanoyl-sn-glycero-3-phosphate + choline + H(+). The enzyme catalyses a 1-acyl-sn-glycero-3-phospho-L-serine + H2O = a 1-acyl-sn-glycero-3-phosphate + L-serine + H(+). The catalysed reaction is 1-(9Z-octadecenoyl)-sn-glycero-3-phospho-L-serine + H2O = 1-(9Z-octadecenoyl)-sn-glycero-3-phosphate + L-serine + H(+). It carries out the reaction a 2-acyl-sn-glycero-3-phospho-L-serine + H2O = a 2-acyl-sn-glycerol 3-phosphate + L-serine + H(+). With respect to regulation, inhibited by EDTA and EGTA. Its function is as follows. Secreted lysophospholipase D that hydrolyzes lysophospholipids to produce the signaling molecule lysophosphatidic acid (LPA) in extracellular fluids. Its major substrate is lysophosphatidylcholine. Can also act on sphingosylphosphorylcholine producing sphingosine-1-phosphate, a modulator of cell motility. Can hydrolyze, in vitro, bis-pNPP, to some extent pNP-TMP, and barely ATP. Involved in several motility-related processes such as angiogenesis and neurite outgrowth. Acts as an angiogenic factor by stimulating migration of smooth muscle cells and microtubule formation. Stimulates migration of melanoma cells, probably via a pertussis toxin-sensitive G protein. May have a role in induction of parturition. Possible involvement in cell proliferation and adipose tissue development. Required for LPA production in activated platelets, cleaves the sn-1 lysophospholipids to generate sn-1 lysophosphatidic acids containing predominantly 18:2 and 20:4 fatty acids. Shows a preference for the sn-1 to the sn-2 isomer of 1-O-alkyl-sn-glycero-3-phosphocholine (lyso-PAF). The polypeptide is Autotaxin (Mus musculus (Mouse)).